Consider the following 729-residue polypeptide: Phosphoribosylformylglycinamidine synthase subunit PurL (729 aa).

Residue His-54 is part of the active site. ATP-binding residues include Tyr-57 and Lys-96. Residue Glu-98 participates in Mg(2+) binding. Substrate-binding positions include 99–102 (SHNH) and Arg-121. The active-site Proton acceptor is His-100. A Mg(2+)-binding site is contributed by Asp-122. Gln-245 is a substrate binding site. Residue Asp-273 coordinates Mg(2+). Residue 317–319 (ETQ) coordinates substrate. The ATP site is built by Asp-495 and Gly-532. Residue Asn-533 participates in Mg(2+) binding. Residue Ser-535 coordinates substrate.

The protein belongs to the FGAMS family. Monomer. Part of the FGAM synthase complex composed of 1 PurL, 1 PurQ and 2 PurS subunits.

It localises to the cytoplasm. It carries out the reaction N(2)-formyl-N(1)-(5-phospho-beta-D-ribosyl)glycinamide + L-glutamine + ATP + H2O = 2-formamido-N(1)-(5-O-phospho-beta-D-ribosyl)acetamidine + L-glutamate + ADP + phosphate + H(+). It participates in purine metabolism; IMP biosynthesis via de novo pathway; 5-amino-1-(5-phospho-D-ribosyl)imidazole from N(2)-formyl-N(1)-(5-phospho-D-ribosyl)glycinamide: step 1/2. Its function is as follows. Part of the phosphoribosylformylglycinamidine synthase complex involved in the purines biosynthetic pathway. Catalyzes the ATP-dependent conversion of formylglycinamide ribonucleotide (FGAR) and glutamine to yield formylglycinamidine ribonucleotide (FGAM) and glutamate. The FGAM synthase complex is composed of three subunits. PurQ produces an ammonia molecule by converting glutamine to glutamate. PurL transfers the ammonia molecule to FGAR to form FGAM in an ATP-dependent manner. PurS interacts with PurQ and PurL and is thought to assist in the transfer of the ammonia molecule from PurQ to PurL. This is Phosphoribosylformylglycinamidine synthase subunit PurL from Staphylococcus aureus (strain Mu3 / ATCC 700698).